A 117-amino-acid polypeptide reads, in one-letter code: Holo-[acyl-carrier-protein] synthase (117 aa).

Mg(2+) contacts are provided by Asp8 and Glu59.

It belongs to the P-Pant transferase superfamily. AcpS family. Requires Mg(2+) as cofactor.

Its subcellular location is the cytoplasm. It carries out the reaction apo-[ACP] + CoA = holo-[ACP] + adenosine 3',5'-bisphosphate + H(+). Transfers the 4'-phosphopantetheine moiety from coenzyme A to a Ser of acyl-carrier-protein. This is Holo-[acyl-carrier-protein] synthase from Staphylococcus carnosus (strain TM300).